A 207-amino-acid chain; its full sequence is MKDLTAKQRSVLIFIEEFIEKNGYPPSVREIARRFRITPRGAQLHLVALEKKGYIERKNGKPRAMRVTKSVKNRVPLIGEIRAGEKKEAIEYLEDYIEVPGSFLSSGYEHFLLRVKGESMIEEHICDGDLVLIRRQDWAQNGDIVAAMVEGEVTLKKFFQRGEMVELRPANKEMSPMFFRADRVKILGKVVGVFRKYEGGRTCFLTR.

The segment at residues 28 to 47 is a DNA-binding region (H-T-H motif); that stretch reads VREIARRFRITPRGAQLHLV. Catalysis depends on for autocatalytic cleavage activity residues Ser119 and Lys156.

Belongs to the peptidase S24 family. As to quaternary structure, homodimer.

It catalyses the reaction Hydrolysis of Ala-|-Gly bond in repressor LexA.. Functionally, represses a number of genes involved in the response to DNA damage (SOS response), including recA and lexA. In the presence of single-stranded DNA, RecA interacts with LexA causing an autocatalytic cleavage which disrupts the DNA-binding part of LexA, leading to derepression of the SOS regulon and eventually DNA repair. The polypeptide is LexA repressor (Thermotoga neapolitana (strain ATCC 49049 / DSM 4359 / NBRC 107923 / NS-E)).